A 120-amino-acid polypeptide reads, in one-letter code: Aspartate 1-decarboxylase (120 aa).

Ser-25 serves as the catalytic Schiff-base intermediate with substrate; via pyruvic acid. At Ser-25 the chain carries Pyruvic acid (Ser). Thr-57 serves as a coordination point for substrate. The Proton donor role is filled by Tyr-58. 73-75 serves as a coordination point for substrate; sequence GAA.

Belongs to the PanD family. Heterooctamer of four alpha and four beta subunits. Pyruvate serves as cofactor. Is synthesized initially as an inactive proenzyme, which is activated by self-cleavage at a specific serine bond to produce a beta-subunit with a hydroxyl group at its C-terminus and an alpha-subunit with a pyruvoyl group at its N-terminus.

The protein resides in the cytoplasm. The catalysed reaction is L-aspartate + H(+) = beta-alanine + CO2. It functions in the pathway cofactor biosynthesis; (R)-pantothenate biosynthesis; beta-alanine from L-aspartate: step 1/1. Functionally, catalyzes the pyruvoyl-dependent decarboxylation of aspartate to produce beta-alanine. The chain is Aspartate 1-decarboxylase from Thermosipho africanus (strain TCF52B).